The primary structure comprises 232 residues: Protein Mis18-alpha (232 aa).

A phosphoserine mark is found at Ser-36, Ser-39, and Ser-40. A Mis18 domain is found at 79–177; that stretch reads PLVFLCSGCR…SVEAIESYIL (99 aa). Zn(2+)-binding residues include Cys-84, Cys-87, Cys-140, and Cys-143. Residue Lys-161 forms a Glycyl lysine isopeptide (Lys-Gly) (interchain with G-Cter in SUMO2) linkage. The residue at position 232 (Ser-232) is a Phosphoserine.

This sequence belongs to the mis18 family. As to quaternary structure, homodimer, and heterodimer with OIP5/MIS18B. Identified in a complex containing MIS18A, OIP5/MIS18B, MIS18BP1, RBBP7 and RBBP4.

The protein resides in the nucleus. Its subcellular location is the chromosome. It is found in the centromere. Functionally, required for recruitment of CENPA to centromeres and normal chromosome segregation during mitosis. The protein is Protein Mis18-alpha (MIS18A) of Otolemur garnettii (Small-eared galago).